Consider the following 611-residue polypeptide: UvrABC system protein C (611 aa).

The GIY-YIG domain maps to 14 to 91 (TSPGCYIHKD…IKENQPKYNI (78 aa)). One can recognise a UVR domain in the interval 196 to 231 (DQIIEDLRGKMAGAAQAMEFEKAAEYRDLIQSIGTL). Residues 587–611 (KLNPKTQEQEQAQLREVAEPQIGLE) are disordered.

It belongs to the UvrC family. As to quaternary structure, interacts with UvrB in an incision complex.

Its subcellular location is the cytoplasm. The UvrABC repair system catalyzes the recognition and processing of DNA lesions. UvrC both incises the 5' and 3' sides of the lesion. The N-terminal half is responsible for the 3' incision and the C-terminal half is responsible for the 5' incision. This chain is UvrABC system protein C, found in Streptococcus sanguinis (strain SK36).